The primary structure comprises 172 residues: Protein-export protein SecB (172 aa).

The protein belongs to the SecB family. As to quaternary structure, homotetramer, a dimer of dimers. One homotetramer interacts with 1 SecA dimer.

The protein resides in the cytoplasm. Functionally, one of the proteins required for the normal export of preproteins out of the cell cytoplasm. It is a molecular chaperone that binds to a subset of precursor proteins, maintaining them in a translocation-competent state. It also specifically binds to its receptor SecA. The sequence is that of Protein-export protein SecB from Xylella fastidiosa (strain 9a5c).